We begin with the raw amino-acid sequence, 30 residues long: Acyl-CoA-binding protein 1 (30 aa).

Basic and acidic residues predominate over residues 1–15 (ALKDEFEEHAEKAKT). Positions 1-30 (ALKDEFEEHAEKAKTLPENTSNENKLILYG) are disordered. Residues 2–30 (LKDEFEEHAEKAKTLPENTSNENKLILYG) form the ACB domain.

This sequence belongs to the ACBP family.

Its subcellular location is the cytoplasm. Its function is as follows. Binds medium- and long-chain acyl-CoA esters with very high affinity and may function as an intracellular carrier of acyl-CoA esters. The protein is Acyl-CoA-binding protein 1 of Digitalis lanata (Grecian foxglove).